The chain runs to 401 residues: cAMP-dependent protein kinase type II-alpha regulatory subunit (401 aa).

N-acetylserine is present on S2. Residues 2-135 (SHIQIPPGLT…RLQEACKDIL (134 aa)) form a dimerization and phosphorylation region. Positions 43 to 65 (ARSRASTPPAAPPSGSQDFDPGA) are disordered. Low complexity predominate over residues 46–58 (RASTPPAAPPSGS). 3 positions are modified to phosphoserine: S48, S75, and S77. S96 bears the Phosphoserine; by PKA mark. 3',5'-cyclic AMP is bound by residues 136-257 (LFKN…ESVP), E205, R214, 258-401 (LLKS…DPGQ), E335, and R344. Phosphothreonine; by PDPK1 is present on T212. A phosphoserine mark is found at S347 and S392.

The protein belongs to the cAMP-dependent kinase regulatory chain family. The inactive form of the enzyme is composed of two regulatory chains and two catalytic chains. Activation by cAMP produces two active catalytic monomers and a regulatory dimer that binds four cAMP molecules. Interacts with AKAP4 and CBFA2T3. Interacts with the phosphorylated form of PJA2. Interacts with MYRIP; this interaction may link PKA to components of the exocytosis machinery, thus facilitating exocytosis, including insulin release. Forms a complex composed of PRKAR2A, GSK3B and GSKIP through GSKIP interaction; facilitates PKA-induced phosphorylation and regulates GSK3B activity. Interacts with ADCY8; inhibits adenylate cyclase activity through PKA phosphorylation. Post-translationally, a second phosphorylation site has not been located. Phosphorylation of Thr-212 by PDPK1 seems to attenuate the activity of PKA, perhaps by strengthening interaction between the regulatory and the catalytic subunits. As to expression, four types of regulatory chains are found: I-alpha, I-beta, II-alpha, and II-beta. Their expression varies among tissues and is in some cases constitutive and in others inducible.

Its subcellular location is the cytoplasm. The protein resides in the cell membrane. Its function is as follows. Regulatory subunit of the cAMP-dependent protein kinases involved in cAMP signaling in cells. Type II regulatory chains mediate membrane association by binding to anchoring proteins, including the MAP2 kinase. The sequence is that of cAMP-dependent protein kinase type II-alpha regulatory subunit (PRKAR2A) from Bos taurus (Bovine).